The primary structure comprises 152 residues: Ribosome maturation factor RimP (152 aa).

This sequence belongs to the RimP family.

The protein localises to the cytoplasm. Its function is as follows. Required for maturation of 30S ribosomal subunits. The chain is Ribosome maturation factor RimP from Proteus mirabilis (strain HI4320).